Here is a 228-residue protein sequence, read N- to C-terminus: ATP synthase subunit a 2 (228 aa).

6 helical membrane-spanning segments follow: residues 16 to 36, 74 to 94, 103 to 123, 139 to 159, 173 to 193, and 194 to 214; these read VGTT…GAWL, VFPF…SSLI, DLSA…WFGI, SPFL…ALAV, LLVL…LHIV, and EALV…AGAI.

It belongs to the ATPase A chain family. As to quaternary structure, F-type ATPases have 2 components, CF(1) - the catalytic core - and CF(0) - the membrane proton channel. CF(1) has five subunits: alpha(3), beta(3), gamma(1), delta(1), epsilon(1). CF(0) has three main subunits: a(1), b(2) and c(9-12). The alpha and beta chains form an alternating ring which encloses part of the gamma chain. CF(1) is attached to CF(0) by a central stalk formed by the gamma and epsilon chains, while a peripheral stalk is formed by the delta and b chains.

It localises to the cell inner membrane. Key component of the proton channel; it plays a direct role in the translocation of protons across the membrane. The polypeptide is ATP synthase subunit a 2 (Pelobacter propionicus (strain DSM 2379 / NBRC 103807 / OttBd1)).